A 299-amino-acid polypeptide reads, in one-letter code: tRNA dimethylallyltransferase (299 aa).

Position 13-20 (13-20) interacts with ATP; that stretch reads GPTASGKT. Substrate is bound at residue 15-20; it reads TASGKT. The tract at residues 38–41 is interaction with substrate tRNA; sequence DSRQ.

This sequence belongs to the IPP transferase family. In terms of assembly, monomer. Requires Mg(2+) as cofactor.

The catalysed reaction is adenosine(37) in tRNA + dimethylallyl diphosphate = N(6)-dimethylallyladenosine(37) in tRNA + diphosphate. Functionally, catalyzes the transfer of a dimethylallyl group onto the adenine at position 37 in tRNAs that read codons beginning with uridine, leading to the formation of N6-(dimethylallyl)adenosine (i(6)A). The chain is tRNA dimethylallyltransferase from Prochlorococcus marinus (strain MIT 9301).